Reading from the N-terminus, the 611-residue chain is Brain-enriched guanylate kinase-associated protein (611 aa).

Y156 bears the Phosphotyrosine mark. 3 positions are modified to phosphoserine: S219, S248, and S265. At T268 the chain carries Phosphothreonine. Residues S284, S364, and S391 each carry the phosphoserine modification. R399 carries the asymmetric dimethylarginine modification. A phosphoserine mark is found at S474, S484, S494, S496, S519, S521, and S525. Residues L520 to N611 are disordered. Basic and acidic residues predominate over residues E554–L563. 2 positions are modified to phosphoserine: S571 and S581.

As to quaternary structure, interacts with DLG4 and DLGAP1 and forms a ternary complex. As to expression, brain-specific. Expressed in neurons and rather enriched at synaptic junctions.

The protein resides in the cytoplasm. Its subcellular location is the membrane. Its function is as follows. May sustain the structure of the postsynaptic density (PSD). The protein is Brain-enriched guanylate kinase-associated protein (Begain) of Rattus norvegicus (Rat).